Here is a 485-residue protein sequence, read N- to C-terminus: Glutamyl-tRNA(Gln) amidotransferase subunit A (485 aa).

Active-site charge relay system residues include K79 and S154. S178 serves as the catalytic Acyl-ester intermediate.

This sequence belongs to the amidase family. GatA subfamily. As to quaternary structure, heterotrimer of A, B and C subunits.

The enzyme catalyses L-glutamyl-tRNA(Gln) + L-glutamine + ATP + H2O = L-glutaminyl-tRNA(Gln) + L-glutamate + ADP + phosphate + H(+). In terms of biological role, allows the formation of correctly charged Gln-tRNA(Gln) through the transamidation of misacylated Glu-tRNA(Gln) in organisms which lack glutaminyl-tRNA synthetase. The reaction takes place in the presence of glutamine and ATP through an activated gamma-phospho-Glu-tRNA(Gln). This chain is Glutamyl-tRNA(Gln) amidotransferase subunit A, found in Staphylococcus epidermidis (strain ATCC 12228 / FDA PCI 1200).